Consider the following 423-residue polypeptide: Mitogen-activated protein kinase 9 (423 aa).

A Protein kinase domain is found at Y26 to I321. ATP contacts are provided by residues I32–V40 and K55. Catalysis depends on D151, which acts as the Proton acceptor. Residue T183 is modified to Phosphothreonine; by MAP2K7. A TXY motif is present at residues T183–Y185. Phosphotyrosine; by MAP2K4 is present on Y185. Residues R366–P375 are compositionally biased toward basic and acidic residues. The interval R366 to R423 is disordered. Residues S387–T416 are compositionally biased toward low complexity.

It belongs to the protein kinase superfamily. CMGC Ser/Thr protein kinase family. MAP kinase subfamily. As to quaternary structure, interacts with MECOM. Binds to at least four scaffolding proteins, MAPK8IP1/JIP-1, MAPK8IP2/JIP-2, MAPK8IP3/JIP-3/JSAP1 and SPAG9/MAPK8IP4/JIP-4. These proteins also bind other components of the JNK signaling pathway. Interacts with NFATC4. Interacts with ATF7; the interaction does not phosphorylate ATF7 but acts as a docking site for ATF7-associated partners such as JUN. Interacts with BCL10. Interacts with CTNNB1 and GSK3B. Interacts with DCLK2. Interacts with MAPKBP1. Interacts with POU5F1; phosphorylates POU5F1 at 'Ser-347'. Found in a complex with SH3RF1, RAC2, MAP3K7/TAK1, MAP2K7/MKK7, MAPK8IP1/JIP1 and MAPK8/JNK1. Requires Mg(2+) as cofactor. Post-translationally, dually phosphorylated on Thr-183 and Tyr-185 by MAP2K7 and MAP2K4, which activates the enzyme. Autophosphorylated in vitro.

Its subcellular location is the cytoplasm. It localises to the nucleus. The enzyme catalyses L-seryl-[protein] + ATP = O-phospho-L-seryl-[protein] + ADP + H(+). It carries out the reaction L-threonyl-[protein] + ATP = O-phospho-L-threonyl-[protein] + ADP + H(+). Activated by threonine and tyrosine phosphorylation by either of two dual specificity kinases, MAP2K4 and MAP2K7. MAP2K4 shows a strong preference for Tyr-185 while MAP2K7 phosphorylates Tyr-183 preferentially. Inhibited by dual specificity phosphatases, such as DUSP1. In terms of biological role, serine/threonine-protein kinase involved in various processes such as cell proliferation, differentiation, migration, transformation and programmed cell death. Extracellular stimuli such as pro-inflammatory cytokines or physical stress stimulate the stress-activated protein kinase/c-Jun N-terminal kinase (SAP/JNK) signaling pathway. In this cascade, two dual specificity kinases MAP2K4/MKK4 and MAP2K7/MKK7 phosphorylate and activate MAPK9/JNK2. In turn, MAPK9/JNK2 phosphorylates a number of transcription factors, primarily components of AP-1 such as JUN and ATF2 and thus regulates AP-1 transcriptional activity. In response to oxidative or ribotoxic stresses, inhibits rRNA synthesis by phosphorylating and inactivating the RNA polymerase 1-specific transcription initiation factor RRN3. Promotes stressed cell apoptosis by phosphorylating key regulatory factors including TP53 and YAP1. In T-cells, MAPK8 and MAPK9 are required for polarized differentiation of T-helper cells into Th1 cells. Upon T-cell receptor (TCR) stimulation, is activated by CARMA1, BCL10, MAP2K7 and MAP3K7/TAK1 to regulate JUN protein levels. Plays an important role in the osmotic stress-induced epithelial tight-junctions disruption. When activated, promotes beta-catenin/CTNNB1 degradation and inhibits the canonical Wnt signaling pathway. Also participates in neurite growth in spiral ganglion neurons. Phosphorylates the CLOCK-BMAL1 heterodimer and plays a role in the regulation of the circadian clock. Phosphorylates POU5F1, which results in the inhibition of POU5F1's transcriptional activity and enhances its proteasomal degradation. Phosphorylates ALKBH5 in response to reactive oxygen species (ROS), promoting ALKBH5 sumoylation and inactivation. This Rattus norvegicus (Rat) protein is Mitogen-activated protein kinase 9 (Mapk9).